We begin with the raw amino-acid sequence, 175 residues long: Large ribosomal subunit protein uL22y (175 aa).

Over residues 153-163 the composition is skewed to basic and acidic residues; it reads EKEEPVKKEPE. Residues 153 to 175 form a disordered region; it reads EKEEPVKKEPETQLAAKSKKSAA.

It belongs to the universal ribosomal protein uL22 family.

The polypeptide is Large ribosomal subunit protein uL22y (RPL17B) (Arabidopsis thaliana (Mouse-ear cress)).